The chain runs to 271 residues: Magnesium dechelatase SGR2, chloroplastic (271 aa).

The N-terminal 54 residues, 1–54 (MCSLATNLLLPSKMKPVFPEKLSTSSLCVTTRRSKMKNRSIVPVARLFGPAIFE), are a transit peptide targeting the chloroplast.

It belongs to the staygreen family. As to quaternary structure, interacts with the light harvesting complex II (LHCII). Interacts with the chlorophyll catabolic enzyme (CCE) RCCR.

The protein resides in the plastid. Its subcellular location is the chloroplast thylakoid membrane. It carries out the reaction chlorophyll a + 2 H(+) = pheophytin a + Mg(2+). Magnesium chelatase involved in chlorophyll a degradation in the chlorophyll-protein complexes of photosystem I (PSI) and photosystem II (PSII). Contributes to the degradation of PSI and PSII in the thylakoid membranes. Required to trigger chlorophyll degradation during natural and dark-induced leaf senescence. Mediates chlorophyll degradation during embryo degreening. Recombinant SGR2 possesses high dechelating activity against chlorophyll a, very low activity against chlorophyllide a, and no activity against chlorophyll b. The polypeptide is Magnesium dechelatase SGR2, chloroplastic (Arabidopsis thaliana (Mouse-ear cress)).